A 338-amino-acid polypeptide reads, in one-letter code: Mitochondrial transcription factor 1 (338 aa).

Leucine 23, aspartate 76, aspartate 100, and asparagine 136 together coordinate S-adenosyl-L-methionine.

It belongs to the class I-like SAM-binding methyltransferase superfamily. rRNA adenine N(6)-methyltransferase family.

The protein localises to the mitochondrion. Its function is as follows. Mitochondrial transcription factor that confers selective promoter recognition on the core subunit of the yeast mitochondrial RNA polymerase. Interacts with DNA in a non-specific manner. This chain is Mitochondrial transcription factor 1 (MTF1), found in Lachancea kluyveri (Yeast).